A 501-amino-acid polypeptide reads, in one-letter code: Protein anon-37Cs (501 aa).

The protein resides in the cytoplasm. Has a non-vital function. The polypeptide is Protein anon-37Cs (anon-37Cs) (Drosophila simulans (Fruit fly)).